Reading from the N-terminus, the 101-residue chain is Small ribosomal subunit protein bS16 (101 aa).

Belongs to the bacterial ribosomal protein bS16 family.

The protein is Small ribosomal subunit protein bS16 of Ureaplasma urealyticum serovar 10 (strain ATCC 33699 / Western).